The chain runs to 507 residues: ATP synthase subunit alpha, chloroplastic (507 aa).

170–177 is a binding site for ATP; that stretch reads GDRQTGKT. Residue threonine 257 is modified to Phosphothreonine.

It belongs to the ATPase alpha/beta chains family. F-type ATPases have 2 components, CF(1) - the catalytic core - and CF(0) - the membrane proton channel. CF(1) has five subunits: alpha(3), beta(3), gamma(1), delta(1), epsilon(1). CF(0) has four main subunits: a, b, b' and c.

It is found in the plastid. The protein resides in the chloroplast thylakoid membrane. The enzyme catalyses ATP + H2O + 4 H(+)(in) = ADP + phosphate + 5 H(+)(out). In terms of biological role, produces ATP from ADP in the presence of a proton gradient across the membrane. The alpha chain is a regulatory subunit. This is ATP synthase subunit alpha, chloroplastic from Aethionema grandiflorum (Persian stone-cress).